The primary structure comprises 350 residues: DNA repair protein RAD51 homolog 2 (350 aa).

Positions 1 to 75 (MSSKKLRRVG…TAYELKTRRS (75 aa)) are interaction with RAD51C. 108 to 115 (GPPGCGKT) provides a ligand contact to ATP.

It belongs to the RecA family. RAD51 subfamily. In terms of assembly, part of the BCDX2 complex consisting of RAD51B, RAD51C, RAD51D and XRCC2; the complex has a ring-like structure arranged into a flat disc around a central channel. The BCDX2 subcomplex RAD51B:RAD51C interacts with RAD51. Interacts with SWSAP1; involved in homologous recombination repair. Interacts with HELQ. Post-translationally, phosphorylated on tyrosine residues by BCR-ABL. In terms of tissue distribution, expressed in a wide range of tissues.

It localises to the nucleus. Its function is as follows. Involved in the homologous recombination repair (HRR) pathway of double-stranded DNA breaks arising during DNA replication or induced by DNA-damaging agents. May promote the assembly of presynaptic RAD51 nucleoprotein filaments. Binds single-stranded DNA and double-stranded DNA and has DNA-dependent ATPase activity. Part of the RAD51 paralog protein complex BCDX2 which acts in the BRCA1-BRCA2-dependent HR pathway. Upon DNA damage, BCDX2 acts downstream of BRCA2 recruitment and upstream of RAD51 recruitment. BCDX2 binds predominantly to the intersection of the four duplex arms of the Holliday junction and to junction of replication forks. The BCDX2 complex was originally reported to bind single-stranded DNA, single-stranded gaps in duplex DNA and specifically to nicks in duplex DNA. The BCDX2 subcomplex RAD51B:RAD51C exhibits single-stranded DNA-dependent ATPase activity suggesting an involvement in early stages of the HR pathway. This Mus musculus (Mouse) protein is DNA repair protein RAD51 homolog 2 (Rad51b).